A 204-amino-acid polypeptide reads, in one-letter code: Quinol oxidase subunit 3 (204 aa).

The next 6 helical transmembrane spans lie at 27 to 47 (FWIF…TFFV), 66 to 86 (LVMI…IAVH), 95 to 115 (GVVI…GCEI), 118 to 138 (FVHY…SGFF), 140 to 160 (LLGT…GILI), and 184 to 204 (FLDV…LGGL).

Belongs to the cytochrome c oxidase subunit 3 family.

It localises to the cell membrane. It carries out the reaction 2 a quinol + O2 = 2 a quinone + 2 H2O. Functionally, catalyzes quinol oxidation with the concomitant reduction of oxygen to water. Major component for energy conversion during vegetative growth. The chain is Quinol oxidase subunit 3 (qoxC) from Bacillus subtilis (strain 168).